Consider the following 800-residue polypeptide: DNA mismatch repair protein MutS (800 aa).

616–623 (GPNMGGKS) is a binding site for ATP.

The protein belongs to the DNA mismatch repair MutS family.

In terms of biological role, this protein is involved in the repair of mismatches in DNA. It is possible that it carries out the mismatch recognition step. This protein has a weak ATPase activity. This chain is DNA mismatch repair protein MutS, found in Buchnera aphidicola subsp. Baizongia pistaciae (strain Bp).